A 1843-amino-acid polypeptide reads, in one-letter code: Zinc finger protein 142 (1843 aa).

2 C2H2-type zinc fingers span residues 103–127 (YFCE…TETH) and 164–186 (LPCP…FKIH). Residues 294-357 (PAAKLPPGHR…LEGHVGSGTE (64 aa)) are disordered. Over residues 318 to 329 (SAEEEDAEEEES) the composition is skewed to acidic residues. Over residues 330 to 340 (VTQKDSQKVMD) the composition is skewed to basic and acidic residues. Position 354 is a phosphoserine (Ser-354). The segment at 363 to 385 (HMCPECKRCFKKRTHLVEHLHLH) adopts a C2H2-type 3 zinc-finger fold. The C2H2-type 4; degenerate zinc finger occupies 391 to 413 (LQCPNCQKFFTSKSKLKTHLLRE). 7 C2H2-type zinc fingers span residues 453 to 475 (YACP…LKSH), 543 to 566 (FHCP…KQGH), 601 to 623 (HQCS…MLLH), 629 to 651 (HKCE…MLTH), 657 to 679 (YMCT…MRKH), 685 to 707 (YQCN…KLRH), and 744 to 767 (YPCR…NCKH). Lys-794 is covalently cross-linked (Glycyl lysine isopeptide (Lys-Gly) (interchain with G-Cter in SUMO2)). Disordered regions lie at residues 819–888 (QCLA…LGEV) and 1103–1177 (PKPV…TGTS). Positions 837–846 (PEREDREHEI) are enriched in basic and acidic residues. Residues 1157–1167 (LPTPSDFPTSP) are compositionally biased toward pro residues. Residues 1168 to 1177 (PENSLPTGTS) show a composition bias toward polar residues. 9 C2H2-type zinc fingers span residues 1331 to 1354 (LQCG…RLKH), 1388 to 1411 (IPCS…LRVH), 1446 to 1469 (FSCT…LRRH), 1514 to 1537 (LECG…RQHH), 1608 to 1630 (YKCT…SRIH), 1636 to 1658 (YHCH…MRIH), 1664 to 1686 (YLCP…MTKH), 1692 to 1715 (YQCP…ETRH), and 1721 to 1743 (FMCE…LRKH). Residues Lys-1353 and Lys-1402 each participate in a glycyl lysine isopeptide (Lys-Gly) (interchain with G-Cter in SUMO2) cross-link. Lys-1747 participates in a covalent cross-link: Glycyl lysine isopeptide (Lys-Gly) (interchain with G-Cter in SUMO2). The C2H2-type 21 zinc finger occupies 1749 to 1771 (YVCNVCHRAFRWAAGLRHHALTH). The tract at residues 1795 to 1843 (HVRRHHPDQADPNQGVGKDPTTPTVHLHDVKLEDPSPPAPPAPSTGPEG) is disordered. Pro residues predominate over residues 1829 to 1843 (PSPPAPPAPSTGPEG).

It belongs to the krueppel C2H2-type zinc-finger protein family.

The protein resides in the nucleus. Functionally, may be involved in transcriptional regulation. In Mus musculus (Mouse), this protein is Zinc finger protein 142.